The sequence spans 184 residues: Myosin regulatory light chain 1 (184 aa).

A disordered region spans residues 1–29 (MFSSKENSLGAKRAPFSSNTTSSQRVAAQ). Phosphoserine is present on Ser36. EF-hand domains lie at 45-80 (SQIQ…LNQD) and 114-149 (SPRN…MGDR). 5 residues coordinate Ca(2+): Asp58, Asp60, Asp62, Asn64, and Asp69.

Binds to myosin II chains myo2 and myo3.

It is found in the cytoplasm. The chain is Myosin regulatory light chain 1 (rlc1) from Schizosaccharomyces pombe (strain 972 / ATCC 24843) (Fission yeast).